Reading from the N-terminus, the 168-residue chain is Photosystem I assembly protein Ycf3 (168 aa).

TPR repeat units lie at residues 35 to 68 (AFTYYRDGMSAQSEGNYAEALQNYYEATRPEIDP), 72 to 105 (SYILYNIGLIHTSNGEHTKALEYYFRALERNPFL), and 120 to 153 (GEQAIRQGDSEIAETWSDQAAEYWKQAIALTPGN).

This sequence belongs to the Ycf3 family.

It localises to the plastid. It is found in the chloroplast thylakoid membrane. Its function is as follows. Essential for the assembly of the photosystem I (PSI) complex. May act as a chaperone-like factor to guide the assembly of the PSI subunits. In Amborella trichopoda, this protein is Photosystem I assembly protein Ycf3.